A 106-amino-acid chain; its full sequence is Photosystem II 5 kDa protein, chloroplastic (106 aa).

A chloroplast-targeting transit peptide spans 1-76; the sequence is MASITMMSSF…ACSVAKTAMA (76 aa). Cys-95 and Cys-104 are oxidised to a cystine.

Disulfide bond. In terms of tissue distribution, expressed in midvein, lamina and periphery of leaves (at protein level).

It is found in the plastid. Its subcellular location is the chloroplast thylakoid membrane. Functionally, may be a component of the oxygen-evolving complex. This Petunia hybrida (Petunia) protein is Photosystem II 5 kDa protein, chloroplastic.